A 181-amino-acid polypeptide reads, in one-letter code: Acireductone dioxygenase (181 aa).

H97, H99, E103, and H141 together coordinate Fe(2+). Ni(2+) contacts are provided by H97, H99, E103, and H141.

It belongs to the acireductone dioxygenase (ARD) family. As to quaternary structure, monomer. The cofactor is Fe(2+). Ni(2+) serves as cofactor.

The catalysed reaction is 1,2-dihydroxy-5-(methylsulfanyl)pent-1-en-3-one + O2 = 3-(methylsulfanyl)propanoate + CO + formate + 2 H(+). The enzyme catalyses 1,2-dihydroxy-5-(methylsulfanyl)pent-1-en-3-one + O2 = 4-methylsulfanyl-2-oxobutanoate + formate + 2 H(+). It participates in amino-acid biosynthesis; L-methionine biosynthesis via salvage pathway; L-methionine from S-methyl-5-thio-alpha-D-ribose 1-phosphate: step 5/6. In terms of biological role, catalyzes 2 different reactions between oxygen and the acireductone 1,2-dihydroxy-3-keto-5-methylthiopentene (DHK-MTPene) depending upon the metal bound in the active site. Fe-containing acireductone dioxygenase (Fe-ARD) produces formate and 2-keto-4-methylthiobutyrate (KMTB), the alpha-ketoacid precursor of methionine in the methionine recycle pathway. Ni-containing acireductone dioxygenase (Ni-ARD) produces methylthiopropionate, carbon monoxide and formate, and does not lie on the methionine recycle pathway. The protein is Acireductone dioxygenase of Pseudomonas fluorescens (strain ATCC BAA-477 / NRRL B-23932 / Pf-5).